The following is a 72-amino-acid chain: Cytotoxin 9 (72 aa).

Positions 1 to 12 are cleaved as a signal peptide; it reads VVTIVCLDLGYT. 4 cysteine pairs are disulfide-bonded: cysteine 15–cysteine 33, cysteine 26–cysteine 50, cysteine 54–cysteine 65, and cysteine 66–cysteine 71.

The protein belongs to the three-finger toxin family. Short-chain subfamily. Type IA cytotoxin sub-subfamily. As to quaternary structure, monomer in solution; Homodimer and oligomer in the presence of negatively charged lipids forming a pore with a size ranging between 20 and 30 Angstroms. Expressed by the venom gland.

The protein resides in the secreted. Shows cytolytic activity on many different cells by forming a pore in lipid membranes. In vivo, increases heart rate or kills the animal by cardiac arrest. In addition, it binds to heparin with high affinity, interacts with Kv channel-interacting protein 1 (KCNIP1) in a calcium-independent manner, and binds to integrin alpha-V/beta-3 (ITGAV/ITGB3) with moderate affinity. Preferentially binds acidic phospholipids like phosphatidylserine, phosphatidic acid and phosphatidyl glycerol. Has hemolytic activity towards human erythrocytes (EC(50)=0.171 uM) and cytolytic activity towards various cell lines. This chain is Cytotoxin 9, found in Naja naja (Indian cobra).